A 96-amino-acid polypeptide reads, in one-letter code: MTEPPLPHESADDGRARLSYEDARDELIQIVQRLELGGLPLEEALRLWERGEELARVCQAWLDGARARLEAYRAPEQSAANDVSAPGSAEEHDHGR.

A disordered region spans residues 73 to 96 (RAPEQSAANDVSAPGSAEEHDHGR).

The protein belongs to the XseB family. Heterooligomer composed of large and small subunits.

It localises to the cytoplasm. The catalysed reaction is Exonucleolytic cleavage in either 5'- to 3'- or 3'- to 5'-direction to yield nucleoside 5'-phosphates.. Bidirectionally degrades single-stranded DNA into large acid-insoluble oligonucleotides, which are then degraded further into small acid-soluble oligonucleotides. The sequence is that of Exodeoxyribonuclease 7 small subunit from Acidothermus cellulolyticus (strain ATCC 43068 / DSM 8971 / 11B).